The following is a 342-amino-acid chain: UDP-N-acetylglucosamine transporter YEA4 (342 aa).

Residues 1-6 are Cytoplasmic-facing; it reads MWNSLK. A helical transmembrane segment spans residues 7–27; that stretch reads AFALVFGGCCSNVITFETLMS. At 28–35 the chain is on the lumenal side; sequence NETGSINN. A helical transmembrane segment spans residues 36 to 56; it reads LITFCQFLFVTCQGLPEFLDV. Residues 57-61 are Cytoplasmic-facing; it reads HQPFP. A helical transmembrane segment spans residues 62–82; sequence YFKPLKTPLHVYVITVVLFYI. Topologically, residues 83 to 96 are lumenal; that stretch reads SSTTNNNVFKYNIS. The chain crosses the membrane as a helical span at residues 97 to 117; that stretch reads IPIHIVFRCFGTVITMFTCWL. The Cytoplasmic segment spans residues 118-123; that stretch reads LNGRKY. A helical transmembrane segment spans residues 124 to 144; the sequence is TKIQILSTLFLTIGAIIASLF. The Lumenal segment spans residues 145–168; the sequence is KDADFRYQDLKLQAWKIGSDQSVD. Residues 169 to 189 traverse the membrane as a helical segment; that stretch reads LTFIFGICILVLSSFTSSLLS. Residues 190–253 are Cytoplasmic-facing; sequence AYNERTYQKY…GGKILVPREE (64 aa). The helical transmembrane segment at 254 to 274 threads the bilayer; that stretch reads TLLLFNVLTQYFCVKGVNILA. Residues 275–307 are Lumenal-facing; sequence SKTNALTLSITLLVRKFISLLLSVRLFDNNLSY. The chain crosses the membrane as a helical span at residues 308 to 328; the sequence is TGYIGVYLVFFGAFIYSLGSI. The Cytoplasmic segment spans residues 329-342; the sequence is HPRQNDKGAIKKSK.

It belongs to the nucleotide-sugar transporter family. SLC35B subfamily.

The protein resides in the endoplasmic reticulum. It is found in the endoplasmic reticulum membrane. Functionally, sugar transporter that specifically mediates the transport of UDP-N-acetylglucosamine (UDP-GlcNAc) and is required for cell wall chitin synthesis. The polypeptide is UDP-N-acetylglucosamine transporter YEA4 (YEA4) (Saccharomyces cerevisiae (strain ATCC 204508 / S288c) (Baker's yeast)).